The sequence spans 382 residues: D-galactonate dehydratase (382 aa).

A Mg(2+)-binding site is contributed by D183. H185 (proton donor) is an active-site residue. Residues E209 and E235 each coordinate Mg(2+). Catalysis depends on H285, which acts as the Proton acceptor.

This sequence belongs to the mandelate racemase/muconate lactonizing enzyme family. GalD subfamily. Requires Mg(2+) as cofactor.

It catalyses the reaction D-galactonate = 2-dehydro-3-deoxy-D-galactonate + H2O. The protein operates within carbohydrate acid metabolism; D-galactonate degradation; D-glyceraldehyde 3-phosphate and pyruvate from D-galactonate: step 1/3. Functionally, catalyzes the dehydration of D-galactonate to 2-keto-3-deoxy-D-galactonate. The chain is D-galactonate dehydratase from Escherichia coli (strain UTI89 / UPEC).